The sequence spans 149 residues: Squidulin (149 aa).

N-acetylalanine is present on A1. EF-hand domains follow at residues 7 to 42 (KQIA…LGRT), 43 to 78 (PSDA…QMGP), 80 to 115 (DPEK…FSDE), and 117 to 149 (LTSE…MTPK). Ca(2+) is bound by residues D20, D22, D24, Q26, E31, D56, D58, N60, T62, E67, D93, D95, N97, E104, D130, D132, D134, M136, and E141.

The protein belongs to the calmodulin family.

Functionally, not known. This protein has four functional calcium-binding sites. This chain is Squidulin, found in Doryteuthis pealeii (Longfin inshore squid).